Reading from the N-terminus, the 845-residue chain is MVVVACPNSSLVEAQMDADRSGSCSKYDYASAYSRLRSAARAAGTGVSSVLILSSPDVDSVCATRILTSLLLQDDIAHRIVPVEGYRTLLNTLSTVFAPHDNDNASSSSSSTTDVKSVVFINLGAVLSLPTTFNIPPSCTIHVIDSHRPWNLENLFATSHANDSVWCWDDGEIATKLCRQGGERDAFEKLEFDVDSDSESDSDSHSDSHSDSVSDPEDASDSNDSGSDSARSHDERQRDGSGGKRKRGSHSPLSRRRQRHKQGQRHKPRHRSTSASATRLTNAERHRYRNILTRYYARGESFGMSVSSMLYLLCESLGRADRESLWLAIVGLTSLYLSNNIDLETYETYSAAYASEVIAIEPTSSNAPTEAWSLDLLTNANNNAQEQAARSATATATGAARAQNRAVRSVISKNTKAEDADDRSIRIVGSELRLTLYRHWSLETAMYHTAYVAAKLGIWRERGLSKLRGLMAKMGFSLTAVRQNYTHMPLDLRRSLVRKLEAIAPEYGLTQLTYRGFERSLGFRTAPLGAADVVEGVSALLIGAHGIKIEVDTPGMVFASSSTTPLGNSFGANLNPANPNAQTSELFATKRVWNLGTALTDSITSAIGAATGNAWSNDQTEANGGLHVDVSSTQPALAAVASVQDVGALERAERRVATSNFYEAYRALDFSRSTSVDLLRSSVLLSEALHRKIVARGISLITNQSIRTLKNFRLAILRDGADLELFTHVDVLARLADWLTTSLRDIIVQQQASTNAQRKKQPAASTRLPFILAALHRAKDTFLVLGSTASAIDGVVQHNHFTAAFQHAASVSRARVRHDHFRTCSIHVRTSDLAAFVENVHLKIK.

The interval 193–283 is disordered; that stretch reads DVDSDSESDS…SASATRLTNA (91 aa). 2 stretches are compositionally biased toward basic and acidic residues: residues 202–212 and 230–242; these read SDSHSDSHSDS and ARSH…DGSG. Residues 243–272 are compositionally biased toward basic residues; the sequence is GKRKRGSHSPLSRRRQRHKQGQRHKPRHRS.

Belongs to the CDC45 family.

The protein localises to the nucleus. In terms of biological role, temperature-sensitive protein required for DNA synthesis. May be a transcription factor that regulates the level or influences the stability of DNA polymerases or auxiliary proteins. The polypeptide is Protein TSD2 (TSD2) (Mycosarcoma maydis (Corn smut fungus)).